A 314-amino-acid chain; its full sequence is Nodulation protein D 1 (314 aa).

Positions 6–63 (LDLNLLVALDALMTERNLTAAARSINLSQPAMSAAVGRLRTYFNDDLFTMVGRELVPT) constitute an HTH lysR-type domain. The segment at residues 23–42 (LTAAARSINLSQPAMSAAVG) is a DNA-binding region (H-T-H motif).

Belongs to the LysR transcriptional regulatory family.

Functionally, nodD regulates the expression of the nodABCFE genes which encode other nodulation proteins. NodD is also a negative regulator of its own expression. Binds flavonoids as inducers. The chain is Nodulation protein D 1 (nodD1) from Rhizobium leguminosarum bv. phaseoli.